Here is a 460-residue protein sequence, read N- to C-terminus: G-protein coupled receptor 22 (460 aa).

Topologically, residues 1–74 are cytoplasmic; the sequence is MESMPSSLTH…YPVSFQVSLT (74 aa). A helical transmembrane segment spans residues 75-95; it reads GFLMLEIVLGLSSNLTVLALY. Residues 96-114 lie on the Extracellular side of the membrane; it reads CMKSNLVSSVSNIVTMNLH. Residues 115 to 135 form a helical membrane-spanning segment; that stretch reads VLDVLVCVGCIPLTIVVVLLP. Residues 136 to 144 lie on the Cytoplasmic side of the membrane; sequence LEGNNALIC. The helical transmembrane segment at 145–165 threads the bilayer; the sequence is CFHEACVSFASVATAANVLAI. The Extracellular segment spans residues 166 to 185; sequence TLDRYDISVRPANRVLTMGR. Residues 186-206 form a helical membrane-spanning segment; sequence AVALLGSIWALSFFSFLVPFI. Residues 207 to 235 lie on the Cytoplasmic side of the membrane; sequence EEGFFSQAGNERNQTEAEEPSNEYYTELG. Residues 236–256 form a helical membrane-spanning segment; it reads LYYHLLAQIPIFFFTAVVMLV. Residues 257-343 are Extracellular-facing; that stretch reads TYYKILQALN…ERQKRVFRMS (87 aa). Positions 276–286 are enriched in basic residues; it reads VPKKKPRKKKT. The disordered stretch occupies residues 276 to 309; that stretch reads VPKKKPRKKKTISMTSTQPESTDASQSSAGRNAP. The segment covering 287–305 has biased composition (polar residues); sequence ISMTSTQPESTDASQSSAG. The helical transmembrane segment at 344-364 threads the bilayer; sequence LLIISTFLLCWTPITVLNTVI. Residues 365 to 377 are Cytoplasmic-facing; sequence LSVGPSNFTVRLR. Residues 378–398 form a helical membrane-spanning segment; sequence LGFLVMAYGTTIFHPLLYAFT. Over 399–460 the chain is Extracellular; that stretch reads RQKFQKVLKS…QKCLSSEDVE (62 aa).

This sequence belongs to the G-protein coupled receptor 1 family.

The protein resides in the cell membrane. Functionally, orphan G-protein coupled receptor that regulates cilia length and structure in the Kupffer's vesicle leading to the left-right asymmetry development by establishing a directional fluid flow. The chain is G-protein coupled receptor 22 (gpr22a) from Danio rerio (Zebrafish).